Consider the following 352-residue polypeptide: Thiosulfate transporter TsuA (352 aa).

Residues 1 to 21 (MFSMILSGLICGALLGFVMQR) traverse the membrane as a helical segment. Residues 22–44 (GRFCLTGGFRDMYIVKNNRMFYA) are Cytoplasmic-facing. Residues 45–65 (LLIAISVQSVGVFALIQAGLL) traverse the membrane as a helical segment. The Periplasmic portion of the chain corresponds to 66 to 70 (TYEAG). The helical transmembrane segment at 71-91 (AFPWLGTVIGGYIFGLGIVLA) threads the bilayer. Residues 92–102 (GGCATGTWYRA) lie on the Cytoplasmic side of the membrane. A helical transmembrane segment spans residues 103 to 123 (GEGLIGSWIALFTYMVMSAVM). The Periplasmic portion of the chain corresponds to 124-148 (RSPHASGLNQTLQHYSTEHNSIAET). A helical membrane pass occupies residues 149–169 (FNLSVWPLVAVLLVITLWVVM). The Cytoplasmic portion of the chain corresponds to 170 to 197 (KELKKPKLKVATLPPRRTGIAHILFEKR). A helical membrane pass occupies residues 198–218 (WHPFVTAVLIGLIALLAWPLS). Residues 219-247 (EATGRMFGLGITSPTANILQFLVAGDMKY) are Periplasmic-facing. Residues 248-268 (INWGVFLVLGIFVGSFIAAKA) form a helical membrane-spanning segment. At 269–289 (SREFRVRAADAQTTLRSGLGG) the chain is on the cytoplasmic side. Residues 290–310 (VLMGFGASIAGGCSIGNGLVM) form a helical membrane-spanning segment. Over 311–317 (TAMMTWQ) the chain is Periplasmic. Residues 318-338 (GWIGLVFMILGVWTASWLVYV) form a helical membrane-spanning segment. Residues 339 to 352 (RPQRKARLATAAAN) lie on the Cytoplasmic side of the membrane.

The protein belongs to the TsuA/YedE (TC 9.B.102) family.

The protein resides in the cell inner membrane. The enzyme catalyses thiosulfate(in) = thiosulfate(out). Its function is as follows. Mediates thiosulfate uptake. This Escherichia coli (strain K12) protein is Thiosulfate transporter TsuA.